A 383-amino-acid polypeptide reads, in one-letter code: 8-amino-7-oxononanoate synthase (383 aa).

Substrate is bound at residue arginine 23. Glycine 110–phenylalanine 111 provides a ligand contact to pyridoxal 5'-phosphate. Substrate is bound at residue histidine 135. Pyridoxal 5'-phosphate contacts are provided by serine 181, histidine 209, and threonine 235. Lysine 238 carries the N6-(pyridoxal phosphate)lysine modification. Position 351 (threonine 351) interacts with substrate.

The protein belongs to the class-II pyridoxal-phosphate-dependent aminotransferase family. BioF subfamily. Homodimer. It depends on pyridoxal 5'-phosphate as a cofactor.

It carries out the reaction 6-carboxyhexanoyl-[ACP] + L-alanine + H(+) = (8S)-8-amino-7-oxononanoate + holo-[ACP] + CO2. The protein operates within cofactor biosynthesis; biotin biosynthesis. Catalyzes the decarboxylative condensation of pimeloyl-[acyl-carrier protein] and L-alanine to produce 8-amino-7-oxononanoate (AON), [acyl-carrier protein], and carbon dioxide. The protein is 8-amino-7-oxononanoate synthase of Aliivibrio fischeri (strain ATCC 700601 / ES114) (Vibrio fischeri).